Reading from the N-terminus, the 102-residue chain is Acid shock protein (102 aa).

The N-terminal stretch at 1–21 is a signal peptide; the sequence is MKKVLALVVAAAMGLSSAAFA. Positions 22-41 are enriched in low complexity; the sequence is AETATTPAPTATTTKAAPAK. A propeptide spanning residues 22–58 is cleaved from the precursor; that stretch reads AETATTPAPTATTTKAAPAKTTHHKKQHKAAPAQKAQ. The disordered stretch occupies residues 22-102; it reads AETATTPAPT…PAKPAAQPAA (81 aa). The span at 80 to 90 shows a compositional bias: basic residues; sequence AAKKHARKHSH. Low complexity predominate over residues 91–102; that stretch reads QQPAKPAAQPAA.

This sequence belongs to the Asr family. Post-translationally, proteolytic processing gives rise to the active protein.

The protein resides in the periplasm. Required for growth and/or survival at acidic conditions. This Escherichia coli O127:H6 (strain E2348/69 / EPEC) protein is Acid shock protein.